The sequence spans 68 residues: Conotoxin tx3b (68 aa).

A signal peptide spans 1–19 (MSKLGALLTICLLLFSLTA). Residues 20–52 (VPLDGDQHADQPAQRLQDRIPTEDHPLFDPNKR) constitute a propeptide that is removed on maturation. 3 disulfides stabilise this stretch: Cys53-Cys67, Cys54-Cys63, and Cys59-Cys66. Met61 bears the Methionine sulfoxide; partial mark. Position 67 is a cysteine amide (Cys67).

Expressed by the venom duct.

It localises to the secreted. Functionally, intracranial injection into mice causes scratching, hyperactivity and circular motion. The sequence is that of Conotoxin tx3b from Conus textile (Cloth-of-gold cone).